A 597-amino-acid chain; its full sequence is DNA import protein CedB (597 aa).

The chain crosses the membrane as a helical span at residues 10–30 (VVLLILGIISFNLVFIILAII). 286-293 (GPTGSGKT) is a binding site for ATP.

The protein localises to the cell membrane. Its function is as follows. Part of the Ced system, which is involved in DNA import. The protein is DNA import protein CedB of Sulfolobus acidocaldarius (strain ATCC 33909 / DSM 639 / JCM 8929 / NBRC 15157 / NCIMB 11770).